Reading from the N-terminus, the 331-residue chain is L-lactate dehydrogenase A chain (331 aa).

NAD(+) contacts are provided by residues 29-57 and arginine 98; that span reads GMVG…MEDK. The substrate site is built by arginine 105, asparagine 137, and arginine 168. Asparagine 137 contacts NAD(+). Histidine 192 serves as the catalytic Proton acceptor. Threonine 247 contacts substrate.

The protein belongs to the LDH/MDH superfamily. LDH family. As to quaternary structure, homotetramer.

Its subcellular location is the cytoplasm. It carries out the reaction (S)-lactate + NAD(+) = pyruvate + NADH + H(+). The protein operates within fermentation; pyruvate fermentation to lactate; (S)-lactate from pyruvate: step 1/1. Its function is as follows. Interconverts simultaneously and stereospecifically pyruvate and lactate with concomitant interconversion of NADH and NAD(+). The protein is L-lactate dehydrogenase A chain (ldha) of Dissostichus eleginoides (Patagonian toothfish).